An 86-amino-acid polypeptide reads, in one-letter code: Acyl carrier protein (86 aa).

The Carrier domain maps to 10-85 (DKIEQKVIEM…DVIKYIKERQ (76 aa)). O-(pantetheine 4'-phosphoryl)serine is present on Ser-45.

The protein belongs to the acyl carrier protein (ACP) family. In terms of processing, 4'-phosphopantetheine is transferred from CoA to a specific serine of apo-ACP by AcpS. This modification is essential for activity because fatty acids are bound in thioester linkage to the sulfhydryl of the prosthetic group.

The protein resides in the cytoplasm. The protein operates within lipid metabolism; fatty acid biosynthesis. In terms of biological role, carrier of the growing fatty acid chain in fatty acid biosynthesis. The protein is Acyl carrier protein of Rickettsia africae (strain ESF-5).